The following is an 87-amino-acid chain: UPF0250 protein PC1_1177 (87 aa).

Belongs to the UPF0250 family.

The chain is UPF0250 protein PC1_1177 from Pectobacterium carotovorum subsp. carotovorum (strain PC1).